Reading from the N-terminus, the 508-residue chain is UTP--glucose-1-phosphate uridylyltransferase (508 aa).

At S13 the chain carries Phosphoserine. UTP-binding positions include 113–116 (LNGG), K127, Q190, and G222. Residue 115-116 (GG) participates in substrate binding. K127 serves as a coordination point for Mg(2+). Substrate is bound by residues H223 and 251–253 (NID). Residues D253 and K396 each coordinate UTP. Position 253 (D253) interacts with Mg(2+). K396 is a catalytic residue. T426 bears the Phosphothreonine mark. S434 carries the phosphoserine modification. N6-acetyllysine is present on K438. S448 and S461 each carry phosphoserine. Residues 457–508 (HLTVSGDVTFGKNVSLKGTVIIIXNHGDRIDIPPGAVLENKIVSGNLRILDH) are oligomerization. Residues 502 to 503 (NL) are critical for end-to-end subunit interaction.

Belongs to the UDPGP type 1 family. As to quaternary structure, homooctamer.

It is found in the cytoplasm. It carries out the reaction alpha-D-glucose 1-phosphate + UTP + H(+) = UDP-alpha-D-glucose + diphosphate. Its pathway is glycan biosynthesis; glycogen biosynthesis. UTP--glucose-1-phosphate uridylyltransferase catalyzing the conversion of glucose-1-phosphate into UDP-glucose, a crucial precursor for the production of glycogen. The chain is UTP--glucose-1-phosphate uridylyltransferase (UGP2) from Sus scrofa (Pig).